Consider the following 329-residue polypeptide: Bifunctional muramidase/DL-endopeptidase CwlT (329 aa).

An N-terminal signal peptide occupies residues M1–T29. The segment at R59–V192 is muramidase. The region spanning M206 to K329 is the NlpC/P60 domain. The active-site Nucleophile is C237. H290 (proton acceptor) is an active-site residue. The active site involves N302.

It belongs to the peptidase C40 family.

It localises to the secreted. It carries out the reaction Hydrolysis of (1-&gt;4)-beta-linkages between N-acetylmuramic acid and N-acetyl-D-glucosamine residues in a peptidoglycan and between N-acetyl-D-glucosamine residues in chitodextrins.. Exhibits both muramidase and DL-endopeptidase activities. The N-terminal region acts as a N-acetylmuramidase, which cleaves the bond between N-acetylmuramic acid and N-acetyl-D-glucosamine (MurNAc-GlcNAc) in peptidoglycan. The C-terminal region acts as a DL-endopeptidase that cleaves the bond between D-gamma-glutamate and meso-diaminopimelic acid. Cannot degrade purified B.anthracis peptidoglycan, which differ from those of B.subtilis. CwlT is required for ICEBs1 conjugation: the muramidase activity is essential, whereas the peptidase activity is partially dispensable for transfer of ICEBs1. The sequence is that of Bifunctional muramidase/DL-endopeptidase CwlT from Bacillus subtilis (strain 168).